The sequence spans 338 residues: MSASGLPFDDFRELLRNLPGPDAAALVAARERDAQLTKPPGALGRLEEIAFWLAAWTGRPPAVNRPLVAIFAGNHGVTRQGVTPFPSSVTAQMVENFAAGGAAINQICVTHDLGLKVFDLALDYPTGDITEEAALSERDCAATMAFGMEAIAGGTDLLCIGEMGIGNTTIAAAINLGLYGGTAEEWVGPGTGSEGEVLKRKIAAVERAVALHRDHLSDPLELMRRLGGREIAAMAGAILAARMQKVPVIIDGYVATAAAAILKAANPAALDHCLIGHVSGEPGHIRAIEKLGKTPLLALGMRLGEGTGAALAAGIVKAAAACHGGMATFAQAGVSNKD.

The active-site Proton acceptor is Glu305.

This sequence belongs to the CobT family.

It carries out the reaction 5,6-dimethylbenzimidazole + nicotinate beta-D-ribonucleotide = alpha-ribazole 5'-phosphate + nicotinate + H(+). It functions in the pathway nucleoside biosynthesis; alpha-ribazole biosynthesis; alpha-ribazole from 5,6-dimethylbenzimidazole: step 1/2. Its function is as follows. Catalyzes the synthesis of alpha-ribazole-5'-phosphate from nicotinate mononucleotide (NAMN) and 5,6-dimethylbenzimidazole (DMB). This chain is Nicotinate-nucleotide--dimethylbenzimidazole phosphoribosyltransferase, found in Sinorhizobium fredii (strain NBRC 101917 / NGR234).